The primary structure comprises 497 residues: Tryptophan decarboxylase 2 (497 aa).

A162, S163, T257, and N311 together coordinate pyridoxal 5'-phosphate. The residue at position 314 (K314) is an N6-(pyridoxal phosphate)lysine.

This sequence belongs to the group II decarboxylase family. Pyridoxal 5'-phosphate serves as cofactor.

It catalyses the reaction L-tryptophan + H(+) = tryptamine + CO2. In terms of biological role, involved in serotonin biosynthesis. Catalyzes the decarboxylation of L-tryptophan to tryptamine, which is converted to serotonin by tryptamine 5-hydroxylase. May play a minor role in serotonin biosynthetis during senescence. Accumulation of serotonin attenuates leaf senescence. This Oryza sativa subsp. japonica (Rice) protein is Tryptophan decarboxylase 2.